The chain runs to 512 residues: Photosystem II CP47 reaction center protein (512 aa).

Transmembrane regions (helical) follow at residues 21–36 (AVHL…WAGS), 101–115 (IVLS…IWHW), 140–156 (GIHL…FGAF), 203–218 (IAAG…FHLS), 237–252 (VLSS…AFVV), and 457–472 (TFAL…HGAR).

It belongs to the PsbB/PsbC family. PsbB subfamily. As to quaternary structure, PSII is composed of 1 copy each of membrane proteins PsbA, PsbB, PsbC, PsbD, PsbE, PsbF, PsbH, PsbI, PsbJ, PsbK, PsbL, PsbM, PsbT, PsbX, PsbY, PsbZ, Psb30/Ycf12, at least 3 peripheral proteins of the oxygen-evolving complex and a large number of cofactors. It forms dimeric complexes. Binds multiple chlorophylls. PSII binds additional chlorophylls, carotenoids and specific lipids. is required as a cofactor.

It is found in the plastid. It localises to the chloroplast thylakoid membrane. Its function is as follows. One of the components of the core complex of photosystem II (PSII). It binds chlorophyll and helps catalyze the primary light-induced photochemical processes of PSII. PSII is a light-driven water:plastoquinone oxidoreductase, using light energy to abstract electrons from H(2)O, generating O(2) and a proton gradient subsequently used for ATP formation. The chain is Photosystem II CP47 reaction center protein from Physcomitrium patens (Spreading-leaved earth moss).